The chain runs to 151 residues: Glycosylation-dependent cell adhesion molecule 1 (151 aa).

The first 19 residues, 1-19 (MKFFTVLLFVSLAATSLAL), serve as a signal peptide directing secretion. The segment at 29–123 (MKTQPTDAIP…ENLTKSSQTV (95 aa)) is disordered. Residues 42–52 (STPTSYTSEES) are compositionally biased toward low complexity. Residues 53–71 (TSSKDLSKEPSIFREELIS) show a composition bias toward basic and acidic residues. A phosphoserine mark is found at serine 54, serine 59, serine 63, and serine 71. Over residues 103-114 (RPTTSAATTSEE) the composition is skewed to low complexity. N-linked (GlcNAc...) asparagine glycosylation occurs at asparagine 115.

Belongs to the PP3/GlyCAM-1 family. Extensively O-glycosylated. Lymph nodes. Associated with the lumenal surface of the high endothelial venules of peripheral lymph nodes.

It is found in the cell membrane. Its function is as follows. Adhesion molecule that accomplishes cell binding by presenting carbohydrate(s) to the lectin domain of L-selectin. The chain is Glycosylation-dependent cell adhesion molecule 1 (Glycam1) from Mus musculus (Mouse).